We begin with the raw amino-acid sequence, 100 residues long: Urease subunit gamma (100 aa).

It belongs to the urease gamma subunit family. As to quaternary structure, heterotrimer of UreA (gamma), UreB (beta) and UreC (alpha) subunits. Three heterotrimers associate to form the active enzyme.

The protein localises to the cytoplasm. It catalyses the reaction urea + 2 H2O + H(+) = hydrogencarbonate + 2 NH4(+). Its pathway is nitrogen metabolism; urea degradation; CO(2) and NH(3) from urea (urease route): step 1/1. This chain is Urease subunit gamma, found in Burkholderia multivorans (strain ATCC 17616 / 249).